We begin with the raw amino-acid sequence, 209 residues long: Large ribosomal subunit protein uL3 (209 aa).

Position 150 is an N5-methylglutamine (Q150).

It belongs to the universal ribosomal protein uL3 family. In terms of assembly, part of the 50S ribosomal subunit. Forms a cluster with proteins L14 and L19. Post-translationally, methylated by PrmB.

Functionally, one of the primary rRNA binding proteins, it binds directly near the 3'-end of the 23S rRNA, where it nucleates assembly of the 50S subunit. The sequence is that of Large ribosomal subunit protein uL3 from Photobacterium profundum (strain SS9).